A 227-amino-acid polypeptide reads, in one-letter code: Cytochrome c oxidase subunit 2 (227 aa).

Over 1–14 (MAYPFQLGLQDATS) the chain is Mitochondrial intermembrane. A helical transmembrane segment spans residues 15-45 (PIMEELLHFHDHALMIVFLISSLVLYIISLM). Over 46–59 (LTTKLTHTSTMDAQ) the chain is Mitochondrial matrix. Residues 60–87 (EVETVWTILPAIILILIALPSLRILYMM) traverse the membrane as a helical segment. Topologically, residues 88–227 (DEINNPSLTV…YFETWSALMV (140 aa)) are mitochondrial intermembrane. Residues His-161, Cys-196, Glu-198, Cys-200, His-204, and Met-207 each coordinate Cu cation. Glu-198 contacts Mg(2+). Phosphotyrosine is present on Tyr-218.

It belongs to the cytochrome c oxidase subunit 2 family. As to quaternary structure, component of the cytochrome c oxidase (complex IV, CIV), a multisubunit enzyme composed of 14 subunits. The complex is composed of a catalytic core of 3 subunits MT-CO1, MT-CO2 and MT-CO3, encoded in the mitochondrial DNA, and 11 supernumerary subunits COX4I, COX5A, COX5B, COX6A, COX6B, COX6C, COX7A, COX7B, COX7C, COX8 and NDUFA4, which are encoded in the nuclear genome. The complex exists as a monomer or a dimer and forms supercomplexes (SCs) in the inner mitochondrial membrane with NADH-ubiquinone oxidoreductase (complex I, CI) and ubiquinol-cytochrome c oxidoreductase (cytochrome b-c1 complex, complex III, CIII), resulting in different assemblies (supercomplex SCI(1)III(2)IV(1) and megacomplex MCI(2)III(2)IV(2)). Found in a complex with TMEM177, COA6, COX18, COX20, SCO1 and SCO2. Interacts with TMEM177 in a COX20-dependent manner. Interacts with COX20. Interacts with COX16. Requires Cu cation as cofactor.

It is found in the mitochondrion inner membrane. The catalysed reaction is 4 Fe(II)-[cytochrome c] + O2 + 8 H(+)(in) = 4 Fe(III)-[cytochrome c] + 2 H2O + 4 H(+)(out). Its function is as follows. Component of the cytochrome c oxidase, the last enzyme in the mitochondrial electron transport chain which drives oxidative phosphorylation. The respiratory chain contains 3 multisubunit complexes succinate dehydrogenase (complex II, CII), ubiquinol-cytochrome c oxidoreductase (cytochrome b-c1 complex, complex III, CIII) and cytochrome c oxidase (complex IV, CIV), that cooperate to transfer electrons derived from NADH and succinate to molecular oxygen, creating an electrochemical gradient over the inner membrane that drives transmembrane transport and the ATP synthase. Cytochrome c oxidase is the component of the respiratory chain that catalyzes the reduction of oxygen to water. Electrons originating from reduced cytochrome c in the intermembrane space (IMS) are transferred via the dinuclear copper A center (CU(A)) of subunit 2 and heme A of subunit 1 to the active site in subunit 1, a binuclear center (BNC) formed by heme A3 and copper B (CU(B)). The BNC reduces molecular oxygen to 2 water molecules using 4 electrons from cytochrome c in the IMS and 4 protons from the mitochondrial matrix. The protein is Cytochrome c oxidase subunit 2 (MT-CO2) of Canis aureus (Golden jackal).